An 83-amino-acid chain; its full sequence is Male-specific opa-containing protein (83 aa).

A signal peptide spans 1-18 (MNFIQIAVLFVLVAVALA). The disordered stretch occupies residues 23–83 (DPANLPAPEA…NVNHNVITIG (61 aa)). A compositionally biased stretch (low complexity) spans 28–49 (PAPEAAAAPPAAAAAPPAAAAA). Pro residues predominate over residues 50-59 (PPAPPAPPAA).

In terms of tissue distribution, adult male abdomen.

Its function is as follows. May be a male specific regulatory factor. The sequence is that of Male-specific opa-containing protein (msopa) from Drosophila melanogaster (Fruit fly).